A 445-amino-acid polypeptide reads, in one-letter code: tRNA-2-methylthio-N(6)-dimethylallyladenosine synthase (445 aa).

The region spanning K2–H119 is the MTTase N-terminal domain. Positions 11, 48, 82, 156, 160, and 163 each coordinate [4Fe-4S] cluster. The Radical SAM core domain occupies R142–S378. The 64-residue stretch at Q379–T442 folds into the TRAM domain.

This sequence belongs to the methylthiotransferase family. MiaB subfamily. Monomer. [4Fe-4S] cluster serves as cofactor.

It is found in the cytoplasm. The enzyme catalyses N(6)-dimethylallyladenosine(37) in tRNA + (sulfur carrier)-SH + AH2 + 2 S-adenosyl-L-methionine = 2-methylsulfanyl-N(6)-dimethylallyladenosine(37) in tRNA + (sulfur carrier)-H + 5'-deoxyadenosine + L-methionine + A + S-adenosyl-L-homocysteine + 2 H(+). In terms of biological role, catalyzes the methylthiolation of N6-(dimethylallyl)adenosine (i(6)A), leading to the formation of 2-methylthio-N6-(dimethylallyl)adenosine (ms(2)i(6)A) at position 37 in tRNAs that read codons beginning with uridine. This is tRNA-2-methylthio-N(6)-dimethylallyladenosine synthase from Aromatoleum aromaticum (strain DSM 19018 / LMG 30748 / EbN1) (Azoarcus sp. (strain EbN1)).